We begin with the raw amino-acid sequence, 155 residues long: Desiccation-related protein clone PCC6-19 (155 aa).

Residues 1–155 (MAQFGGEKYG…IKEKLPGGQH (155 aa)) form a disordered region. 2 stretches are compositionally biased toward gly residues: residues 27-39 (AHRG…GGQQ) and 47-76 (GVLG…GALG). A compositionally biased stretch (low complexity) spans 83–92 (GSSSSSSSSE). The segment covering 118–135 (TTTDQQQYGTAATHGQAQ) has biased composition (polar residues). The span at 136–155 (QHEKKGIMDKIKEKLPGGQH) shows a compositional bias: basic and acidic residues.

It belongs to the plant dehydrin family.

In Craterostigma plantagineum (Blue gem), this protein is Desiccation-related protein clone PCC6-19.